The primary structure comprises 136 residues: Large-conductance mechanosensitive channel (136 aa).

Transmembrane regions (helical) follow at residues 9–29 and 79–99; these read AFAS…GAAF and IQTV…LKAI.

The protein belongs to the MscL family. Homopentamer.

It localises to the cell inner membrane. In terms of biological role, channel that opens in response to stretch forces in the membrane lipid bilayer. May participate in the regulation of osmotic pressure changes within the cell. The protein is Large-conductance mechanosensitive channel of Shewanella sp. (strain W3-18-1).